A 178-amino-acid polypeptide reads, in one-letter code: Cytidylate kinase (178 aa).

7-15 contacts ATP; that stretch reads GLPGTGTTT.

Belongs to the cytidylate kinase family. Type 2 subfamily.

It is found in the cytoplasm. It catalyses the reaction CMP + ATP = CDP + ADP. The catalysed reaction is dCMP + ATP = dCDP + ADP. This is Cytidylate kinase from Methanococcus maripaludis (strain C7 / ATCC BAA-1331).